The chain runs to 1226 residues: Methionine synthase (1226 aa).

In terms of domain architecture, Hcy-binding spans R6 to V326. C248, C311, and C312 together coordinate Zn(2+). The Pterin-binding domain maps to F357 to E618. The region spanning S651–S745 is the B12-binding N-terminal domain. Methylcob(III)alamin is bound by residues E695, G757–D761, H760, S805, T809, and A861. One can recognise a B12-binding domain in the interval N747 to E882. An AdoMet activation domain is found at K898 to G1226. Residues D948, R1136, and Y1191 to F1192 each bind S-adenosyl-L-methionine.

It belongs to the vitamin-B12 dependent methionine synthase family. Requires methylcob(III)alamin as cofactor. Zn(2+) serves as cofactor.

It catalyses the reaction (6S)-5-methyl-5,6,7,8-tetrahydrofolate + L-homocysteine = (6S)-5,6,7,8-tetrahydrofolate + L-methionine. Its pathway is amino-acid biosynthesis; L-methionine biosynthesis via de novo pathway; L-methionine from L-homocysteine (MetH route): step 1/1. In terms of biological role, catalyzes the transfer of a methyl group from methyl-cobalamin to homocysteine, yielding enzyme-bound cob(I)alamin and methionine. Subsequently, remethylates the cofactor using methyltetrahydrofolate. The sequence is that of Methionine synthase (metH) from Vibrio parahaemolyticus serotype O3:K6 (strain RIMD 2210633).